The primary structure comprises 66 residues: Large ribosomal subunit protein bL33c (66 aa).

The protein belongs to the bacterial ribosomal protein bL33 family.

It localises to the plastid. It is found in the chloroplast. The protein is Large ribosomal subunit protein bL33c of Cucumis sativus (Cucumber).